Consider the following 483-residue polypeptide: Probable cytochrome P450 517A4 (483 aa).

Residues 1–21 (MEIVNVLLFLIILFLVKDFVK) form a helical membrane-spanning segment. Cys-429 serves as a coordination point for heme.

This sequence belongs to the cytochrome P450 family. The cofactor is heme.

Its subcellular location is the membrane. The polypeptide is Probable cytochrome P450 517A4 (cyp517A4) (Dictyostelium discoideum (Social amoeba)).